The following is a 71-amino-acid chain: UPF0337 protein RPA4418 (71 aa).

The segment at 1–54 (MGSTMDKIKGQANELAGKAKQGIGEATGSDKLKGEGAIQEAKGHGQQALGNAKD) is disordered.

The protein belongs to the UPF0337 (CsbD) family.

The protein is UPF0337 protein RPA4418 of Rhodopseudomonas palustris (strain ATCC BAA-98 / CGA009).